A 375-amino-acid polypeptide reads, in one-letter code: Cobalt-precorrin-5B C(1)-methyltransferase (375 aa).

It belongs to the CbiD family.

It carries out the reaction Co-precorrin-5B + S-adenosyl-L-methionine = Co-precorrin-6A + S-adenosyl-L-homocysteine. It participates in cofactor biosynthesis; adenosylcobalamin biosynthesis; cob(II)yrinate a,c-diamide from sirohydrochlorin (anaerobic route): step 6/10. In terms of biological role, catalyzes the methylation of C-1 in cobalt-precorrin-5B to form cobalt-precorrin-6A. This is Cobalt-precorrin-5B C(1)-methyltransferase from Paracidovorax citrulli (strain AAC00-1) (Acidovorax citrulli).